Consider the following 418-residue polypeptide: Probable serine hydroxymethyltransferase (418 aa).

Residues Leu-118 and 122-124 (GHL) contribute to the (6S)-5,6,7,8-tetrahydrofolate site. Lys-226 bears the N6-(pyridoxal phosphate)lysine mark. 351-353 (SPF) contacts (6S)-5,6,7,8-tetrahydrofolate.

This sequence belongs to the SHMT family. Homodimer. Pyridoxal 5'-phosphate serves as cofactor.

Its subcellular location is the cytoplasm. The catalysed reaction is (6R)-5,10-methylene-5,6,7,8-tetrahydrofolate + glycine + H2O = (6S)-5,6,7,8-tetrahydrofolate + L-serine. Its pathway is one-carbon metabolism; tetrahydrofolate interconversion. Functionally, catalyzes the reversible interconversion of serine and glycine with tetrahydrofolate (THF) serving as the one-carbon carrier. This reaction serves as the major source of one-carbon groups required for the biosynthesis of purines, thymidylate, methionine, and other important biomolecules. In Mesomycoplasma hyopneumoniae (strain 232) (Mycoplasma hyopneumoniae), this protein is Probable serine hydroxymethyltransferase.